The sequence spans 210 residues: ATP phosphoribosyltransferase (210 aa).

It belongs to the ATP phosphoribosyltransferase family. Short subfamily. Heteromultimer composed of HisG and HisZ subunits.

The protein resides in the cytoplasm. The enzyme catalyses 1-(5-phospho-beta-D-ribosyl)-ATP + diphosphate = 5-phospho-alpha-D-ribose 1-diphosphate + ATP. The protein operates within amino-acid biosynthesis; L-histidine biosynthesis; L-histidine from 5-phospho-alpha-D-ribose 1-diphosphate: step 1/9. Functionally, catalyzes the condensation of ATP and 5-phosphoribose 1-diphosphate to form N'-(5'-phosphoribosyl)-ATP (PR-ATP). Has a crucial role in the pathway because the rate of histidine biosynthesis seems to be controlled primarily by regulation of HisG enzymatic activity. This chain is ATP phosphoribosyltransferase, found in Petrotoga mobilis (strain DSM 10674 / SJ95).